A 436-amino-acid polypeptide reads, in one-letter code: GTPase Der (436 aa).

EngA-type G domains follow at residues 4-167 (PTVA…PVEE) and 175-351 (IRFS…ESQN). GTP contacts are provided by residues 10 to 17 (GRPNVGKS), 57 to 61 (DTGGI), 119 to 122 (NKVD), 181 to 188 (GRPNVGKS), 229 to 233 (DTAGM), and 294 to 297 (NKWD). Positions 352-436 (KRIPSAVLND…PIHLIARKRK (85 aa)) constitute a KH-like domain.

It belongs to the TRAFAC class TrmE-Era-EngA-EngB-Septin-like GTPase superfamily. EngA (Der) GTPase family. Associates with the 50S ribosomal subunit.

In terms of biological role, GTPase that plays an essential role in the late steps of ribosome biogenesis. In Streptococcus pyogenes serotype M1, this protein is GTPase Der.